The primary structure comprises 314 residues: Homoserine O-acetyltransferase (314 aa).

Residue C142 is the Acyl-thioester intermediate of the active site. Substrate-binding residues include K163 and S192. Residue H235 is the Proton acceptor of the active site. E237 is a catalytic residue. R249 is a binding site for substrate.

The protein belongs to the MetA family.

Its subcellular location is the cytoplasm. The catalysed reaction is L-homoserine + acetyl-CoA = O-acetyl-L-homoserine + CoA. It participates in amino-acid biosynthesis; L-methionine biosynthesis via de novo pathway; O-acetyl-L-homoserine from L-homoserine: step 1/1. Functionally, transfers an acetyl group from acetyl-CoA to L-homoserine, forming acetyl-L-homoserine. The polypeptide is Homoserine O-acetyltransferase (Streptococcus mutans serotype c (strain ATCC 700610 / UA159)).